A 138-amino-acid chain; its full sequence is Endonuclease V (138 aa).

T2 serves as the catalytic Nucleophile; via amide nitrogen. E23 serves as the catalytic Proton acceptor.

In terms of assembly, monomer.

The catalysed reaction is Cleaves the N-glycosidic bond between the 5'-pyrimidine residue in cyclobutadipyrimidine (in DNA) and the corresponding deoxy-D-ribose residue.. It catalyses the reaction 2'-deoxyribonucleotide-(2'-deoxyribose 5'-phosphate)-2'-deoxyribonucleotide-DNA = a 3'-end 2'-deoxyribonucleotide-(2,3-dehydro-2,3-deoxyribose 5'-phosphate)-DNA + a 5'-end 5'-phospho-2'-deoxyribonucleoside-DNA + H(+). Its function is as follows. Participates in the repair of UV-damaged DNA by excising pyrimidine dimers that are the major UV-lesions. DNA glycosylase activity hydrolyzes the glycosylic bond of the 5' pyrimidine of the dimer. This leaves apurinic/apyrimidic (AP) sites in the DNA. These AP sites are removed by the AP lyase activity which cleaves the intrapyrimidine phosphodiester bond. Catalysis proceeds via a protonated imine covalent intermediate between the alpha-amino group of the N-terminal threonine residue and the C1' of the deoxyribose sugar of the 5' pyrimidine at the dimer site. This chain is Endonuclease V, found in Enterobacteria phage T4 (Bacteriophage T4).